The primary structure comprises 182 residues: Lipid A acyltransferase PagP (182 aa).

The signal sequence occupies residues 1–21 (MTQYFRALAFFLLLVPATAMA). The N-palmitoyl cysteine moiety is linked to residue C22. C22 carries the S-diacylglycerol cysteine lipid modification. Catalysis depends on residues H55, D98, and S99.

The protein belongs to the lipid A palmitoyltransferase family. As to quaternary structure, homodimer.

The protein resides in the cell outer membrane. It carries out the reaction a lipid A + a 1,2-diacyl-sn-glycero-3-phosphocholine = a hepta-acyl lipid A + a 2-acyl-sn-glycero-3-phosphocholine. The enzyme catalyses a lipid IVA + a 1,2-diacyl-sn-glycero-3-phosphocholine = a lipid IVB + a 2-acyl-sn-glycero-3-phosphocholine. It catalyses the reaction a lipid IIA + a 1,2-diacyl-sn-glycero-3-phosphocholine = a lipid IIB + a 2-acyl-sn-glycero-3-phosphocholine. In terms of biological role, transfers a fatty acid residue from the sn-1 position of a phospholipid to the N-linked hydroxyfatty acid chain on the proximal unit of lipid A or its precursors. The chain is Lipid A acyltransferase PagP from Bordetella parapertussis (strain 12822 / ATCC BAA-587 / NCTC 13253).